A 123-amino-acid polypeptide reads, in one-letter code: Large ribosomal subunit protein uL18 (123 aa).

Belongs to the universal ribosomal protein uL18 family. Part of the 50S ribosomal subunit; part of the 5S rRNA/L5/L18/L25 subcomplex. Contacts the 5S and 23S rRNAs.

This is one of the proteins that bind and probably mediate the attachment of the 5S RNA into the large ribosomal subunit, where it forms part of the central protuberance. The chain is Large ribosomal subunit protein uL18 from Desulforudis audaxviator (strain MP104C).